A 577-amino-acid chain; its full sequence is MNPVNATALYISASRLVLNYDPGDPKAFTEINRLLPYFRQSLSCCVCGHLLQDPIAPTNSTCQHYVCKTCKGKKMMMKPSCSWCKDYEQFEENKQLSILVNCYKKLCEYITQTTLARDIIEAVDCSSDILALLNDGSLFCEETEKPSDSSFTLCLTHSPLPSTSEPTTDPQASLSPMSESTLSIAIGSSVINGLPTYNGLSIDRFGINIPSPEHSNTIDVCNTVDIKTEDLSDSLPPVCDTVATDLCSTGIDICSFSEDIKPGDSLLLSVEEVLRSLETVSNTEVCCPNLQPNLEATVSNGPFLQLSSQSLSHNVFMSTSPALHGLSCTAATPKIAKLNRKRSRSESDSEKVQPLPISTIIRGPTLGASAPVTVKRESKISLQPIATVPNGGTTPKISKTVLLSTKSMKKSHEHGSKKSHSKTKPGILKKDKAVKEKIPSHHFMPGSPTKTVYKKPQEKKGCKCGRATQNPSVLTCRGQRCPCYSNRKACLDCICRGCQNSYMANGEKKLEAFAVPEKALEQTRLTLGINVTSIAVRNASTSTSVINVTGSPVTTFLAASTHDDKSLDEAIDMRFDC.

The sufficient for interaction with MSL1 stretch occupies residues 1–116; it reads MNPVNATALY…CEYITQTTLA (116 aa). Residues Cys44, Cys47, Cys62, His64, Cys67, Cys70, Cys81, and Cys84 each coordinate Zn(2+). An RING-type zinc finger spans residues 44–85; sequence CCVCGHLLQDPIAPTNSTCQHYVCKTCKGKKMMMKPSCSWCK. Lys375 participates in a covalent cross-link: Glycyl lysine isopeptide (Lys-Gly) (interchain with G-Cter in SUMO2). A disordered region spans residues 405 to 427; sequence TKSMKKSHEHGSKKSHSKTKPGI. Positions 407 to 423 are enriched in basic residues; the sequence is SMKKSHEHGSKKSHSKT. The residue at position 447 (Ser447) is a Phosphoserine. In terms of domain architecture, CXC MSL2-type spans 457-508; sequence QEKKGCKCGRATQNPSVLTCRGQRCPCYSNRKACLDCICRGCQNSYMANGEK. Residues Cys462, Cys464, Cys476, Cys481, Cys483, Cys490, Cys493, Cys495, and Cys498 each contribute to the Zn(2+) site.

This sequence belongs to the MSL2 family. In terms of assembly, component of a multisubunit histone acetyltransferase complex (MSL) at least composed of the KAT8/MOF/MYST1, MSL1/hampin, MSL2 and MSL3. Forms a MSL heterotetrameric core with MSL1.

It is found in the nucleus. Its subcellular location is the chromosome. The enzyme catalyses S-ubiquitinyl-[E2 ubiquitin-conjugating enzyme]-L-cysteine + [acceptor protein]-L-lysine = [E2 ubiquitin-conjugating enzyme]-L-cysteine + N(6)-ubiquitinyl-[acceptor protein]-L-lysine.. It participates in protein modification; protein ubiquitination. Its function is as follows. Non-catalytic component of the MSL histone acetyltransferase complex, a multiprotein complex that mediates the majority of histone H4 acetylation at 'Lys-16' (H4K16ac), an epigenetic mark that prevents chromatin compaction. The MSL complex is required for chromosome stability and genome integrity by maintaining homeostatic levels of H4K16ac. The MSL complex is also involved in gene dosage by promoting up-regulation of genes expressed by the X chromosome. X up-regulation is required to compensate for autosomal biallelic expression. The MSL complex also participates in gene dosage compensation by promoting expression of Tsix non-coding RNA. MSL2 plays a key role in gene dosage by ensuring biallelic expression of a subset of dosage-sensitive genes, including many haploinsufficient genes. Acts by promoting promoter-enhancer contacts, thereby preventing DNA methylation of one allele and creating a methylation-free environment for methylation-sensitive transcription factors such as SP1, KANSL1 and KANSL3. Also acts as an E3 ubiquitin ligase that promotes monoubiquitination of histone H2B at 'Lys-35' (H2BK34Ub), but not that of H2A. This activity is greatly enhanced by heterodimerization with MSL1. H2B ubiquitination in turn stimulates histone H3 methylation at 'Lys-4' (H3K4me) and 'Lys-79' (H3K79me) and leads to gene activation, including that of HOXA9 and MEIS1. Also involved in the DNA damage response by mediating ubiquitination of TP53/p53 and TP53BP1. This Homo sapiens (Human) protein is E3 ubiquitin-protein ligase MSL2.